Here is a 185-residue protein sequence, read N- to C-terminus: MLELVYEEIEEKMGKTLEVFKNDLKKVRTGRASLALLDGIVVDYYGTPTPLNQLASLSVPESRLIVIQPWDATAIKDVEKAILQANIDLTPSNDGKVIRLSIPPLTEDRRKEIAKRVNQMAEEHKVAMRNIRRDANETLKQMKKDGDISEDESFAGKDKVQKVTDGYIERIDEVFKAKEKEILEL.

It belongs to the RRF family.

The protein localises to the cytoplasm. Its function is as follows. Responsible for the release of ribosomes from messenger RNA at the termination of protein biosynthesis. May increase the efficiency of translation by recycling ribosomes from one round of translation to another. In Desulfosudis oleivorans (strain DSM 6200 / JCM 39069 / Hxd3) (Desulfococcus oleovorans), this protein is Ribosome-recycling factor.